A 342-amino-acid chain; its full sequence is Inositol-tetrakisphosphate 1-kinase 5 (342 aa).

K25 and K67 together coordinate 1D-myo-inositol 1,3,4-trisphosphate. ATP is bound by residues R102 and K154. 2 residues coordinate 1D-myo-inositol 1,3,4-trisphosphate: H165 and K197. ATP contacts are provided by residues 186–197 and S212; that span reads QEFVNHGGVIFK. Mg(2+) is bound by residues D283, D298, and N300. N300 provides a ligand contact to 1D-myo-inositol 1,3,4-trisphosphate.

Belongs to the ITPK1 family. Monomer. Requires Mg(2+) as cofactor. As to expression, expressed in roots, leaves, flowers, anthers and embryos.

It catalyses the reaction 1D-myo-inositol 3,4,5,6-tetrakisphosphate + ATP = 1D-myo-inositol 1,3,4,5,6-pentakisphosphate + ADP + H(+). The catalysed reaction is 1D-myo-inositol 1,3,4-trisphosphate + ATP = 1D-myo-inositol 1,3,4,5-tetrakisphosphate + ADP + H(+). It carries out the reaction 1D-myo-inositol 1,3,4-trisphosphate + ATP = 1D-myo-inositol 1,3,4,6-tetrakisphosphate + ADP + H(+). Its function is as follows. Kinase that can phosphorylate various inositol polyphosphate such as Ins(3,4,5,6)P4 or Ins(1,3,4)P3 and participates in phytic acid biosynthesis in developing seeds. Phytic acid is the primary storage form of phosphorus in cereal grains and other plant seeds. In Oryza sativa subsp. japonica (Rice), this protein is Inositol-tetrakisphosphate 1-kinase 5 (ITPK5).